The following is a 594-amino-acid chain: Beta-fructofuranosidase, insoluble isoenzyme CWINV3 (594 aa).

Residues 1-28 (MAKLNRSNIGLSLLLSMFLANFITDLEA) form the signal peptide. Substrate-binding positions include 50 to 53 (WMND), glutamine 69, tryptophan 77, and 113 to 114 (WS). The active site involves aspartate 53. N-linked (GlcNAc...) asparagine glycosylation is present at asparagine 147. A substrate-binding site is contributed by 179–180 (RD). Residue asparagine 217 is glycosylated (N-linked (GlcNAc...) asparagine). Position 235 (glutamate 235) interacts with substrate. N-linked (GlcNAc...) asparagine glycosylation is found at asparagine 297 and asparagine 329. The cysteines at positions 428 and 480 are disulfide-linked.

It belongs to the glycosyl hydrolase 32 family. In terms of tissue distribution, expressed in seedlings, leaves, flowers, and seeds.

It is found in the secreted. It localises to the extracellular space. The protein localises to the apoplast. Its subcellular location is the cell wall. The enzyme catalyses Hydrolysis of terminal, non-reducing (2-&gt;1)- and (2-&gt;6)-linked beta-D-fructofuranose residues in fructans.. Its function is as follows. 6-fructan exohydrolase that can use phlein, levan, neokestose, levanbiose, 6-kestose, and 1-kestose as substrates. The protein is Beta-fructofuranosidase, insoluble isoenzyme CWINV3 (CWINV3) of Arabidopsis thaliana (Mouse-ear cress).